Reading from the N-terminus, the 361-residue chain is Plasmid recombination enzyme (361 aa).

The DNA site is built by tyrosine 44 and tyrosine 114. The interval 331–361 is disordered; it reads RAGLKEPSKKAPESSQELDRHKSDELGGPHL.

It belongs to the plasmid mobilization pre family.

The interaction of the RSA site and the pre protein may not only serve a function in plasmid maintenance, but also contribute to the distribution of small antibiotic resistance plasmids among Gram-positive bacteria. The sequence is that of Plasmid recombination enzyme (preA) from Lactiplantibacillus plantarum (Lactobacillus plantarum).